The chain runs to 233 residues: uncharacterized protein (233 aa).

The HTH gntR-type domain maps to 16-84; sequence KTLAKQVIER…TRGGTYFNDK (69 aa). The H-T-H motif DNA-binding region spans 44 to 63; sequence EMELMDILHVSRPVLREALS.

This is an uncharacterized protein from Bacillus subtilis (strain 168).